A 90-amino-acid polypeptide reads, in one-letter code: N(2)-fixation sustaining protein CowN (90 aa).

Belongs to the CowN family.

Its function is as follows. Is required to sustain N(2)-dependent growth in the presence of low levels of carbon monoxide (CO). Probably acts by protecting the N(2) fixation ability of the nitrogenase complex, which is inactivated in the presence of CO. This chain is N(2)-fixation sustaining protein CowN, found in Methylocella silvestris (strain DSM 15510 / CIP 108128 / LMG 27833 / NCIMB 13906 / BL2).